The chain runs to 486 residues: Ribulose bisphosphate carboxylase large chain (486 aa).

2 residues coordinate substrate: Asn125 and Thr175. The active-site Proton acceptor is the Lys177. Position 179 (Lys179) interacts with substrate. 3 residues coordinate Mg(2+): Lys203, Asp205, and Glu206. Lys203 is subject to N6-carboxylysine. The active-site Proton acceptor is His295. Substrate contacts are provided by Arg296, His328, and Ser380.

It belongs to the RuBisCO large chain family. Type I subfamily. In terms of assembly, heterohexadecamer of 8 large chains and 8 small chains. The cofactor is Mg(2+).

It catalyses the reaction 2 (2R)-3-phosphoglycerate + 2 H(+) = D-ribulose 1,5-bisphosphate + CO2 + H2O. It carries out the reaction D-ribulose 1,5-bisphosphate + O2 = 2-phosphoglycolate + (2R)-3-phosphoglycerate + 2 H(+). In terms of biological role, ruBisCO catalyzes two reactions: the carboxylation of D-ribulose 1,5-bisphosphate, the primary event in carbon dioxide fixation, as well as the oxidative fragmentation of the pentose substrate. Both reactions occur simultaneously and in competition at the same active site. This is Ribulose bisphosphate carboxylase large chain from Cereibacter sphaeroides (Rhodobacter sphaeroides).